A 178-amino-acid polypeptide reads, in one-letter code: Glutamyl-tRNA(Gln) amidotransferase subunit C, mitochondrial (178 aa).

A mitochondrion-targeting transit peptide spans 1-31; sequence MFRHIFTLGPRSISAITVRSRRALSSTAKPV. Residues 26 to 67 form a disordered region; the sequence is STAKPVSAPVTSDDRPNLDVKHLKHPTKVPQQPHKSDIDRRQ. The span at 37–46 shows a compositional bias: basic and acidic residues; sequence SDDRPNLDVK.

The protein belongs to the GatC family. Subunit of the heterotrimeric GatCAB amidotransferase (AdT) complex, composed of A, B and C subunits.

The protein resides in the mitochondrion. It carries out the reaction L-glutamyl-tRNA(Gln) + L-glutamine + ATP + H2O = L-glutaminyl-tRNA(Gln) + L-glutamate + ADP + phosphate + H(+). Its function is as follows. Allows the formation of correctly charged Gln-tRNA(Gln) through the transamidation of misacylated Glu-tRNA(Gln) in the mitochondria. The reaction takes place in the presence of glutamine and ATP through an activated gamma-phospho-Glu-tRNA(Gln). This Aedes aegypti (Yellowfever mosquito) protein is Glutamyl-tRNA(Gln) amidotransferase subunit C, mitochondrial.